Consider the following 227-residue polypeptide: 2-C-methyl-D-erythritol 4-phosphate cytidylyltransferase (227 aa).

The protein belongs to the IspD/TarI cytidylyltransferase family. IspD subfamily.

The enzyme catalyses 2-C-methyl-D-erythritol 4-phosphate + CTP + H(+) = 4-CDP-2-C-methyl-D-erythritol + diphosphate. The protein operates within isoprenoid biosynthesis; isopentenyl diphosphate biosynthesis via DXP pathway; isopentenyl diphosphate from 1-deoxy-D-xylulose 5-phosphate: step 2/6. Functionally, catalyzes the formation of 4-diphosphocytidyl-2-C-methyl-D-erythritol from CTP and 2-C-methyl-D-erythritol 4-phosphate (MEP). In Dehalococcoides mccartyi (strain CBDB1), this protein is 2-C-methyl-D-erythritol 4-phosphate cytidylyltransferase.